Here is a 343-residue protein sequence, read N- to C-terminus: Vancomycin/teicoplanin A-type resistance protein VanA (343 aa).

ATP-binding positions include Lys-133, 169–171, 177–178, 207–214, and Phe-241; these read FVK, SS, and EQAVSGCE. Residues 137-338 form the ATP-grasp domain; the sequence is YIVAKNAGIA…LPELIDRLIV (202 aa). His-244 lines the substrate pocket. 304–305 is an ATP binding site; sequence NE. Mg(2+)-binding residues include Glu-305 and Asn-307.

It belongs to the D-alanine--D-alanine ligase family. Mg(2+) serves as cofactor. Mn(2+) is required as a cofactor.

The protein localises to the cell membrane. The catalysed reaction is (R)-lactate + D-alanine + ATP = D-alanyl-(R)-lactate + ADP + phosphate. Required for high-level resistance to glycopeptide antibiotics. D-Ala--D-Ala ligase of altered specificity which catalyzes ester bond formation between D-Ala and various D-hydroxy acids; produces a peptidoglycan which does not terminate in D-alanine but in D-lactate, thus preventing vancomycin or teicoplanin binding. This is Vancomycin/teicoplanin A-type resistance protein VanA (vanA) from Enterococcus faecium (Streptococcus faecium).